Reading from the N-terminus, the 159-residue chain is Phosphopantetheine adenylyltransferase (159 aa).

A substrate-binding site is contributed by Thr-9. ATP is bound by residues 9–10 (TF) and His-17. Lys-41, Leu-73, and Arg-87 together coordinate substrate. Residues 88 to 90 (GLR), Glu-98, and 123 to 129 (YAFLSST) each bind ATP.

Belongs to the bacterial CoaD family. Homohexamer. The cofactor is Mg(2+).

It localises to the cytoplasm. It carries out the reaction (R)-4'-phosphopantetheine + ATP + H(+) = 3'-dephospho-CoA + diphosphate. Its pathway is cofactor biosynthesis; coenzyme A biosynthesis; CoA from (R)-pantothenate: step 4/5. Its function is as follows. Reversibly transfers an adenylyl group from ATP to 4'-phosphopantetheine, yielding dephospho-CoA (dPCoA) and pyrophosphate. The polypeptide is Phosphopantetheine adenylyltransferase (Vibrio campbellii (strain ATCC BAA-1116)).